The chain runs to 231 residues: 5'-methylthioadenosine/S-adenosylhomocysteine nucleosidase (231 aa).

Catalysis depends on glutamate 12, which acts as the Proton acceptor. Substrate is bound by residues glycine 78, valine 153, and methionine 174–glutamate 175. The active-site Proton donor is the aspartate 198.

This sequence belongs to the PNP/UDP phosphorylase family. MtnN subfamily.

It catalyses the reaction S-adenosyl-L-homocysteine + H2O = S-(5-deoxy-D-ribos-5-yl)-L-homocysteine + adenine. It carries out the reaction S-methyl-5'-thioadenosine + H2O = 5-(methylsulfanyl)-D-ribose + adenine. The catalysed reaction is 5'-deoxyadenosine + H2O = 5-deoxy-D-ribose + adenine. Its pathway is amino-acid biosynthesis; L-methionine biosynthesis via salvage pathway; S-methyl-5-thio-alpha-D-ribose 1-phosphate from S-methyl-5'-thioadenosine (hydrolase route): step 1/2. Functionally, catalyzes the irreversible cleavage of the glycosidic bond in both 5'-methylthioadenosine (MTA) and S-adenosylhomocysteine (SAH/AdoHcy) to adenine and the corresponding thioribose, 5'-methylthioribose and S-ribosylhomocysteine, respectively. Also cleaves 5'-deoxyadenosine, a toxic by-product of radical S-adenosylmethionine (SAM) enzymes, into 5-deoxyribose and adenine. In Vibrio cholerae serotype O1 (strain ATCC 39315 / El Tor Inaba N16961), this protein is 5'-methylthioadenosine/S-adenosylhomocysteine nucleosidase.